The following is a 230-amino-acid chain: Orotidine 5'-phosphate decarboxylase (230 aa).

Residues Asp-11, Lys-34, 61–70 (DLKLHDIPNT), Thr-117, Arg-179, Gln-188, Gly-208, and Arg-209 contribute to the substrate site. Lys-63 acts as the Proton donor in catalysis.

The protein belongs to the OMP decarboxylase family. Type 1 subfamily. As to quaternary structure, homodimer.

The catalysed reaction is orotidine 5'-phosphate + H(+) = UMP + CO2. Its pathway is pyrimidine metabolism; UMP biosynthesis via de novo pathway; UMP from orotate: step 2/2. Catalyzes the decarboxylation of orotidine 5'-monophosphate (OMP) to uridine 5'-monophosphate (UMP). This chain is Orotidine 5'-phosphate decarboxylase, found in Streptococcus gordonii (strain Challis / ATCC 35105 / BCRC 15272 / CH1 / DL1 / V288).